The chain runs to 443 residues: Spermidine hydroxycinnamoyltransferase 1 (443 aa).

Catalysis depends on proton acceptor residues His-167 and Asp-390.

This sequence belongs to the plant acyltransferase family.

Its function is as follows. Hydroxycinnamoyl transferase that catalyzes the transfer of an acyl from p-coumaryol-CoA to spermidine, to produce coumaroyl spermidine. Can use feruloyl-CoA as acyl donor. Contributes to the natural variation of spermidine-based phenolamides in rice cultivars. This chain is Spermidine hydroxycinnamoyltransferase 1, found in Oryza sativa subsp. japonica (Rice).